The sequence spans 652 residues: Threonine--tRNA ligase (652 aa).

The TGS domain maps to 1–64 (MPDVIRITFP…HEDGELVIIT (64 aa)). A catalytic region spans residues 245 to 542 (DHRKLGKELE…LIEEYKGAFP (298 aa)). Zn(2+) is bound by residues cysteine 338, histidine 389, and histidine 519.

Belongs to the class-II aminoacyl-tRNA synthetase family. Homodimer. The cofactor is Zn(2+).

Its subcellular location is the cytoplasm. It catalyses the reaction tRNA(Thr) + L-threonine + ATP = L-threonyl-tRNA(Thr) + AMP + diphosphate + H(+). In terms of biological role, catalyzes the attachment of threonine to tRNA(Thr) in a two-step reaction: L-threonine is first activated by ATP to form Thr-AMP and then transferred to the acceptor end of tRNA(Thr). Also edits incorrectly charged L-seryl-tRNA(Thr). This chain is Threonine--tRNA ligase, found in Geobacillus kaustophilus (strain HTA426).